The primary structure comprises 299 residues: Coenzyme PQQ synthesis protein B (299 aa).

It belongs to the PqqB family.

Its pathway is cofactor biosynthesis; pyrroloquinoline quinone biosynthesis. Its function is as follows. May be involved in the transport of PQQ or its precursor to the periplasm. The polypeptide is Coenzyme PQQ synthesis protein B (Xanthomonas axonopodis pv. citri (strain 306)).